Here is a 497-residue protein sequence, read N- to C-terminus: Probable cytosol aminopeptidase (497 aa).

Mn(2+) is bound by residues K264 and D269. K276 is an active-site residue. The Mn(2+) site is built by D287, D347, and E349. The active site involves R351.

Belongs to the peptidase M17 family. It depends on Mn(2+) as a cofactor.

Its subcellular location is the cytoplasm. It carries out the reaction Release of an N-terminal amino acid, Xaa-|-Yaa-, in which Xaa is preferably Leu, but may be other amino acids including Pro although not Arg or Lys, and Yaa may be Pro. Amino acid amides and methyl esters are also readily hydrolyzed, but rates on arylamides are exceedingly low.. The catalysed reaction is Release of an N-terminal amino acid, preferentially leucine, but not glutamic or aspartic acids.. Presumably involved in the processing and regular turnover of intracellular proteins. Catalyzes the removal of unsubstituted N-terminal amino acids from various peptides. This Thermosynechococcus vestitus (strain NIES-2133 / IAM M-273 / BP-1) protein is Probable cytosol aminopeptidase.